We begin with the raw amino-acid sequence, 537 residues long: Putative cysteine ligase BshC (537 aa).

The stretch at Ile-422–Ile-450 forms a coiled coil.

This sequence belongs to the BshC family.

Functionally, involved in bacillithiol (BSH) biosynthesis. May catalyze the last step of the pathway, the addition of cysteine to glucosamine malate (GlcN-Mal) to generate BSH. In Staphylococcus aureus (strain Mu3 / ATCC 700698), this protein is Putative cysteine ligase BshC.